The primary structure comprises 839 residues: MRWSFLTVLLWLVSLTGAENGFNGWLRYAPVQCDKRCQRALPSSIVTLNSTDSGPIGTASQELQAGLENIVGKQLSIKRSSCGSRSSILVATLEQYRQACNRSSEVPSLGIDGFWLRAYGDTVQIVGENERGALYGAFEYLSLLAQGNFSHVDYTTSAHAPVRWVNQWDNMDGSIERGYAGPSIFFEDGHIVEDLSRVKQYARLLASIRINGVIVNNVNANATLLTSQNMDGLARIANVFRPYGIQIGISLNFASPDTLGGLGTYDPLDPSVISWWANITDSLYDRVPDMAGYLVKASSEGQPGPDTYNRTLAEGANVFAKALQPHGGILMFRTFVYDHHINESIWTNDRANAQVDFFKELDGQFEDNVILQIKYGPIDFQVREPVSPLFANLYKTNMAIELQVTQEYLGQQDHLVYLSPLWKELLDFDLRVDHQPSLVRDIVSGQRFDRQLGGWAAVVNVGTNTTWLGSHLAMSNLYAYGRLAWSPTDDSQGILQDWIRLTFGRDQNVLDTITDMSMASWPAYENYTGNLGIQTLTDILYTHYGPNPASQDNNGWGQWTRADHDTIGMDRTVKNGTGNAGQYPAEIAQVYEDLDSTPDDLLLWFHHVPYTHRLHSGKTVIQHFYDAHYDGAETAHRFLSQWESLKGRIDQQRYNEVLSRLVYQAGHSLVWRDAINNFYWNMSGISDEKNRVGHHPWRVEAESMTLDGYEPYTVSPFETASNYKAVVTTSNSTTGTAQTKLQFPSGTYDLGVNYYDMYGGKSEWTVYVNDRVVGQWEGNSENTLGHTPSIYIDGHSATRITFRGVEIENGDQLKIVGVPDGVEPAPLDYVVLLPPDVVD.

An N-terminal signal peptide occupies residues 1–18 (MRWSFLTVLLWLVSLTGA). N-linked (GlcNAc...) asparagine glycosylation is found at Asn-49, Asn-101, Asn-148, Asn-221, Asn-278, Asn-309, Asn-342, Asn-464, Asn-526, Asn-575, Asn-681, and Asn-731.

Belongs to the glycosyl hydrolase 67 family.

The protein localises to the secreted. The catalysed reaction is an alpha-D-glucuronoside + H2O = D-glucuronate + an alcohol. Functionally, alpha-glucuronidase involved in the hydrolysis of xylan, a major structural heterogeneous polysaccharide found in plant biomass representing the second most abundant polysaccharide in the biosphere, after cellulose. Releases 4-O-methylglucuronic acid from xylan. In Aspergillus flavus (strain ATCC 200026 / FGSC A1120 / IAM 13836 / NRRL 3357 / JCM 12722 / SRRC 167), this protein is Probable alpha-glucuronidase A (aguA).